The chain runs to 356 residues: Tyrosine recombinase XerS (356 aa).

The Core-binding (CB) domain maps to 16–121 (LMPWFVLEYY…ALSCLYKYLT (106 aa)). The region spanning 169-354 (KFLDYVENEY…VNDEQKNALD (186 aa)) is the Tyr recombinase domain. Active-site residues include arginine 210, lysine 234, histidine 306, arginine 309, and histidine 332. Tyrosine 341 (O-(3'-phospho-DNA)-tyrosine intermediate) is an active-site residue.

The protein belongs to the 'phage' integrase family. XerS subfamily.

Its subcellular location is the cytoplasm. With respect to regulation, ftsK is required for recombination. Its function is as follows. Site-specific tyrosine recombinase, which acts by catalyzing the cutting and rejoining of the recombining DNA molecules. Essential to convert dimers of the bacterial chromosome into monomers to permit their segregation at cell division. The sequence is that of Tyrosine recombinase XerS from Streptococcus thermophilus (strain ATCC BAA-250 / LMG 18311).